The following is a 520-amino-acid chain: Zinc finger and BTB domain-containing protein 18 (520 aa).

One can recognise a BTB domain in the interval 24-91 (CDCTVLVGDA…MYEGILQFKG (68 aa)). The disordered stretch occupies residues 121-140 (ATTDSTKKEEDTSSFSDKVE). 4 C2H2-type zinc fingers span residues 368–390 (FMCP…LSTH), 408–430 (PTCS…ERTH), 436–458 (YTCT…AVVH), and 464–487 (HACK…RKFH).

The protein belongs to the krueppel C2H2-type zinc-finger protein family. ZBTB18 subfamily.

The protein localises to the nucleus. Its function is as follows. Transcriptional repressor that plays a role in various developmental processes. Specifically binds the consensus DNA sequence 5'-[AC]ACATCTG[GT][AC]-3' which contains the E box core, and acts by recruiting chromatin remodeling multiprotein complexes. In Xenopus laevis (African clawed frog), this protein is Zinc finger and BTB domain-containing protein 18 (zbtb18).